The chain runs to 245 residues: P2Y purinoceptor 13 (245 aa).

The Extracellular segment spans residues 1 to 9 (QLRAFVCRL). An intrachain disulfide couples cysteine 7 to cysteine 85. Residues 10–30 (SSVIFYETMYVGIVLLGLIAF) form a helical membrane-spanning segment. Residues 31-35 (DRFLK) lie on the Cytoplasmic side of the membrane. The chain crosses the membrane as a helical span at residues 36–56 (IIRPLRNIFLKKTVFAKTVSV). Topologically, residues 57-85 (FIWSFFFFISLPNMILSNKEATPSSVKKC) are extracellular. A helical membrane pass occupies residues 86 to 106 (ASLKGPLGLKWHQIVNNISQF). The Cytoplasmic portion of the chain corresponds to 107–126 (IFWTVFVLMLVFYVVIAKKV). Residues 127 to 147 (YDSYRKSKSKDRKNNKKLEGK) traverse the membrane as a helical segment. Residues 148-174 (VFVVVAVFFVCFAPFHFTRVPYTYSQT) lie on the Extracellular side of the membrane. A helical transmembrane segment spans residues 175-195 (NNKTDCRLQNQLFIAKETTLF). The Cytoplasmic portion of the chain corresponds to 196–245 (LAATNICMDPLIYIFLCKKFTEKLPCMRGRKTIASSQENQSSQTDNITLG).

It belongs to the G-protein coupled receptor 1 family.

It is found in the cell membrane. Functionally, receptor for ADP. Coupled to G(i)-proteins. May play a role in hematopoiesis and the immune system. The sequence is that of P2Y purinoceptor 13 (P2RY13) from Macaca fascicularis (Crab-eating macaque).